The primary structure comprises 209 residues: Ribosomal RNA large subunit methyltransferase E (209 aa).

S-adenosyl-L-methionine-binding residues include Gly63, Trp65, Asp83, Asp99, and Asp124. Lys164 serves as the catalytic Proton acceptor.

Belongs to the class I-like SAM-binding methyltransferase superfamily. RNA methyltransferase RlmE family.

The protein localises to the cytoplasm. The enzyme catalyses uridine(2552) in 23S rRNA + S-adenosyl-L-methionine = 2'-O-methyluridine(2552) in 23S rRNA + S-adenosyl-L-homocysteine + H(+). Its function is as follows. Specifically methylates the uridine in position 2552 of 23S rRNA at the 2'-O position of the ribose in the fully assembled 50S ribosomal subunit. This is Ribosomal RNA large subunit methyltransferase E from Pseudoalteromonas translucida (strain TAC 125).